Here is a 312-residue protein sequence, read N- to C-terminus: Glyoxylate/hydroxypyruvate reductase A (312 aa).

Arg227 is a catalytic residue. The active-site Proton donor is His275.

The protein belongs to the D-isomer specific 2-hydroxyacid dehydrogenase family. GhrA subfamily.

It is found in the cytoplasm. It carries out the reaction glycolate + NADP(+) = glyoxylate + NADPH + H(+). The enzyme catalyses (R)-glycerate + NAD(+) = 3-hydroxypyruvate + NADH + H(+). It catalyses the reaction (R)-glycerate + NADP(+) = 3-hydroxypyruvate + NADPH + H(+). Functionally, catalyzes the NADPH-dependent reduction of glyoxylate and hydroxypyruvate into glycolate and glycerate, respectively. Inactive towards 2-oxo-D-gluconate, 2-oxoglutarate, oxaloacetate and pyruvate. Only D- and L-glycerate are involved in the oxidative activity with NADP. Activity with NAD is very low. The polypeptide is Glyoxylate/hydroxypyruvate reductase A (ghrA) (Escherichia coli (strain K12)).